The chain runs to 323 residues: 1-aminocyclopropane-1-carboxylate oxidase 4 (323 aa).

The residue at position 1 (M1) is an N-acetylmethionine. The region spanning 153 to 254 (PTFGTKVSNY…RMSIASFYNP (102 aa)) is the Fe2OG dioxygenase domain. Positions 177, 179, and 234 each coordinate Fe cation. Position 245 (R245) interacts with 2-oxoglutarate.

The protein belongs to the iron/ascorbate-dependent oxidoreductase family. The cofactor is Fe cation. Expressed in vegetative tissues. Expressed constitutively at a low level in leaves and blades.

The catalysed reaction is 1-aminocyclopropane-1-carboxylate + L-ascorbate + O2 = ethene + L-dehydroascorbate + hydrogen cyanide + CO2 + 2 H2O. It functions in the pathway alkene biosynthesis; ethylene biosynthesis via S-adenosyl-L-methionine; ethylene from S-adenosyl-L-methionine: step 2/2. In terms of biological role, enzyme involved in the ethylene biosynthesis. May promote stem elongation by maximizing the extensibility cells, possibly by activating ethylene biosynthesis, in response to very-long-chain fatty acids (VLCFAs C20:0 to C30:0). This Arabidopsis thaliana (Mouse-ear cress) protein is 1-aminocyclopropane-1-carboxylate oxidase 4 (ACO4).